Consider the following 91-residue polypeptide: Large ribosomal subunit protein bL27 (91 aa).

Residues 1–10 are compositionally biased toward gly residues; that stretch reads MAQKKGGGST. The interval 1 to 20 is disordered; that stretch reads MAQKKGGGSTRNGRDSQPKM.

The protein belongs to the bacterial ribosomal protein bL27 family.

The polypeptide is Large ribosomal subunit protein bL27 (Verminephrobacter eiseniae (strain EF01-2)).